The primary structure comprises 239 residues: Demethylmenaquinone methyltransferase (239 aa).

S-adenosyl-L-methionine is bound by residues Thr-60, Asp-81, and 106–107; that span reads DA.

This sequence belongs to the class I-like SAM-binding methyltransferase superfamily. MenG/UbiE family.

The catalysed reaction is a 2-demethylmenaquinol + S-adenosyl-L-methionine = a menaquinol + S-adenosyl-L-homocysteine + H(+). It functions in the pathway quinol/quinone metabolism; menaquinone biosynthesis; menaquinol from 1,4-dihydroxy-2-naphthoate: step 2/2. In terms of biological role, methyltransferase required for the conversion of demethylmenaquinol (DMKH2) to menaquinol (MKH2). In Staphylococcus haemolyticus (strain JCSC1435), this protein is Demethylmenaquinone methyltransferase.